The following is a 132-amino-acid chain: MKKTALLNIALSRTIAGLGHGDILVIGDAGLPVPPGVELIDLALTPGIPDFASVLRAVLSEMQVERHVLAEEMQKVVPPGLVEIERLRGKLGKREWLSHEQFKVLSRSARAVVRTGECQPYSNIALIAGVTF.

Catalysis depends on His20, which acts as the Proton donor. Substrate contacts are provided by residues Asp28, His99, and 121–123 (YSN).

The protein belongs to the RbsD / FucU family. RbsD subfamily. As to quaternary structure, homodecamer.

It localises to the cytoplasm. It catalyses the reaction beta-D-ribopyranose = beta-D-ribofuranose. It participates in carbohydrate metabolism; D-ribose degradation; D-ribose 5-phosphate from beta-D-ribopyranose: step 1/2. Catalyzes the interconversion of beta-pyran and beta-furan forms of D-ribose. This Pseudomonas putida (strain W619) protein is D-ribose pyranase.